We begin with the raw amino-acid sequence, 140 residues long: MNAITIFFIILSTVAVCIIIFQLYSIYLNYDNIKEFNSAHSAFEFSKSVNTLSLDRTIKDPNDDIYDPKQKWRCVKLDNDYVSVSMFGFKSNGSEIRKFKNLESCIDYTFSQSTHSDIKNPCILQNGIKSKECIFLKSMF.

A helical; Signal-anchor for type II membrane protein transmembrane segment spans residues 1–21 (MNAITIFFIILSTVAVCIIIF). The Virion surface portion of the chain corresponds to 22-140 (QLYSIYLNYD…KECIFLKSMF (119 aa)).

The protein belongs to the poxviridae A28 protein family. In terms of processing, contains two intramolecular disulfide bonds. They are created by the viral disulfide bond formation pathway, a poxvirus-specific pathway that operates on the cytoplasmic side of the MV membranes.

Its subcellular location is the virion membrane. Envelope protein required for virus entry into host cell and for cell-cell fusion (syncytium formation). The sequence is that of Envelope protein A28 homolog from Bos taurus (Bovine).